The sequence spans 238 residues: Ribosomal RNA small subunit methyltransferase G (238 aa).

Residues Gly79, Phe84, 102–104 (EAT), 130–131 (IE), and Arg149 each bind S-adenosyl-L-methionine.

This sequence belongs to the methyltransferase superfamily. RNA methyltransferase RsmG family.

The protein resides in the cytoplasm. Functionally, specifically methylates the N7 position of a guanine in 16S rRNA. This is Ribosomal RNA small subunit methyltransferase G from Chloroflexus aggregans (strain MD-66 / DSM 9485).